We begin with the raw amino-acid sequence, 166 residues long: MRKVKSARKLGRTASHRKATLANLSTQLLLYKRIETTEAKAKETRKYVEKIITKAKGGTVHAQRIIFKKIRDKAAIRELFEDIVGKVADRNGGYTRVIKLAPRYGDAAKMAVIELVDYHEAPESAPVKAKQDRSKRVRGSKKTQEGSEKAEVSASAGEAAAVTEEK.

The tract at residues 122–166 (PESAPVKAKQDRSKRVRGSKKTQEGSEKAEVSASAGEAAAVTEEK) is disordered. Residues 142–151 (KTQEGSEKAE) are compositionally biased toward basic and acidic residues. Residues 152-166 (VSASAGEAAAVTEEK) are compositionally biased toward low complexity.

Belongs to the bacterial ribosomal protein bL17 family. In terms of assembly, part of the 50S ribosomal subunit. Contacts protein L32.

The polypeptide is Large ribosomal subunit protein bL17 (Chlorobium phaeobacteroides (strain BS1)).